The sequence spans 213 residues: tRNA (guanine-N(7)-)-methyltransferase (213 aa).

4 residues coordinate S-adenosyl-L-methionine: Glu-44, Glu-69, Asn-96, and Asp-118. Asp-118 is an active-site residue. Lys-122 is a substrate binding site. The tract at residues 124–129 (RHEKRR) is interaction with RNA. Substrate is bound by residues Asp-154 and 192–195 (TEYE).

Belongs to the class I-like SAM-binding methyltransferase superfamily. TrmB family.

It carries out the reaction guanosine(46) in tRNA + S-adenosyl-L-methionine = N(7)-methylguanosine(46) in tRNA + S-adenosyl-L-homocysteine. It participates in tRNA modification; N(7)-methylguanine-tRNA biosynthesis. Functionally, catalyzes the formation of N(7)-methylguanine at position 46 (m7G46) in tRNA. The chain is tRNA (guanine-N(7)-)-methyltransferase from Latilactobacillus sakei subsp. sakei (strain 23K) (Lactobacillus sakei subsp. sakei).